The primary structure comprises 158 residues: Large ribosomal subunit protein bL35m (158 aa).

This sequence belongs to the bacterial ribosomal protein bL35 family.

The protein localises to the mitochondrion. In Caenorhabditis elegans, this protein is Large ribosomal subunit protein bL35m (mrpl-35).